A 300-amino-acid polypeptide reads, in one-letter code: tRNA-cytidine(32) 2-sulfurtransferase (300 aa).

A PP-loop motif motif is present at residues 57-62 (SGGKDS). [4Fe-4S] cluster contacts are provided by Cys-132, Cys-135, and Cys-223.

It belongs to the TtcA family. In terms of assembly, homodimer. Requires Mg(2+) as cofactor. [4Fe-4S] cluster serves as cofactor.

It is found in the cytoplasm. The catalysed reaction is cytidine(32) in tRNA + S-sulfanyl-L-cysteinyl-[cysteine desulfurase] + AH2 + ATP = 2-thiocytidine(32) in tRNA + L-cysteinyl-[cysteine desulfurase] + A + AMP + diphosphate + H(+). Its pathway is tRNA modification. Catalyzes the ATP-dependent 2-thiolation of cytidine in position 32 of tRNA, to form 2-thiocytidine (s(2)C32). The sulfur atoms are provided by the cysteine/cysteine desulfurase (IscS) system. The chain is tRNA-cytidine(32) 2-sulfurtransferase from Xanthomonas campestris pv. campestris (strain 8004).